A 396-amino-acid polypeptide reads, in one-letter code: L-lactate dehydrogenase (396 aa).

Residues 1–380 (MIISAASDYR…TQDSLVQGLG (380 aa)) enclose the FMN hydroxy acid dehydrogenase domain. A substrate-binding site is contributed by Tyr-24. FMN is bound by residues Ser-106 and Gln-127. Tyr-129 serves as a coordination point for substrate. Thr-155 is an FMN binding site. Arg-164 contributes to the substrate binding site. Lys-251 is a binding site for FMN. The active-site Proton acceptor is the His-275. Position 278 (Arg-278) interacts with substrate. 306–330 (DSGIRNGLDVVRMIALGADTVLLGR) is a binding site for FMN.

This sequence belongs to the FMN-dependent alpha-hydroxy acid dehydrogenase family. Requires FMN as cofactor.

The protein localises to the cell inner membrane. The enzyme catalyses (S)-lactate + A = pyruvate + AH2. In terms of biological role, catalyzes the conversion of L-lactate to pyruvate. Is coupled to the respiratory chain. The protein is L-lactate dehydrogenase of Escherichia coli O127:H6 (strain E2348/69 / EPEC).